A 264-amino-acid polypeptide reads, in one-letter code: 5'-nucleotidase SurE (264 aa).

Residues Asp-10, Asp-11, Ser-43, and Asn-99 each coordinate a divalent metal cation.

Belongs to the SurE nucleotidase family. A divalent metal cation is required as a cofactor.

It localises to the cytoplasm. It catalyses the reaction a ribonucleoside 5'-phosphate + H2O = a ribonucleoside + phosphate. Nucleotidase that shows phosphatase activity on nucleoside 5'-monophosphates. The protein is 5'-nucleotidase SurE of Methanococcus maripaludis (strain C5 / ATCC BAA-1333).